A 358-amino-acid polypeptide reads, in one-letter code: Peptide chain release factor 1 (358 aa).

Gln-235 is subject to N5-methylglutamine.

The protein belongs to the prokaryotic/mitochondrial release factor family. Methylated by PrmC. Methylation increases the termination efficiency of RF1.

It localises to the cytoplasm. Its function is as follows. Peptide chain release factor 1 directs the termination of translation in response to the peptide chain termination codons UAG and UAA. This Brachyspira hyodysenteriae (strain ATCC 49526 / WA1) protein is Peptide chain release factor 1.